Here is a 241-residue protein sequence, read N- to C-terminus: Glucosamine-6-phosphate deaminase (241 aa).

Residue aspartate 67 is the Proton acceptor; for enolization step of the active site. The active-site For ring-opening step is asparagine 136. Histidine 138 (proton acceptor; for ring-opening step) is an active-site residue. The For ring-opening step role is filled by glutamate 143.

The protein belongs to the glucosamine/galactosamine-6-phosphate isomerase family. NagB subfamily.

It carries out the reaction alpha-D-glucosamine 6-phosphate + H2O = beta-D-fructose 6-phosphate + NH4(+). It functions in the pathway amino-sugar metabolism; N-acetylneuraminate degradation; D-fructose 6-phosphate from N-acetylneuraminate: step 5/5. Functionally, catalyzes the reversible isomerization-deamination of glucosamine 6-phosphate (GlcN6P) to form fructose 6-phosphate (Fru6P) and ammonium ion. In Alkaliphilus oremlandii (strain OhILAs) (Clostridium oremlandii (strain OhILAs)), this protein is Glucosamine-6-phosphate deaminase.